The chain runs to 495 residues: Glutamyl-tRNA(Gln) amidotransferase subunit A (495 aa).

Active-site charge relay system residues include Lys78 and Ser159. The active-site Acyl-ester intermediate is the Ser183.

It belongs to the amidase family. GatA subfamily. As to quaternary structure, heterotrimer of A, B and C subunits.

The enzyme catalyses L-glutamyl-tRNA(Gln) + L-glutamine + ATP + H2O = L-glutaminyl-tRNA(Gln) + L-glutamate + ADP + phosphate + H(+). Functionally, allows the formation of correctly charged Gln-tRNA(Gln) through the transamidation of misacylated Glu-tRNA(Gln) in organisms which lack glutaminyl-tRNA synthetase. The reaction takes place in the presence of glutamine and ATP through an activated gamma-phospho-Glu-tRNA(Gln). The sequence is that of Glutamyl-tRNA(Gln) amidotransferase subunit A from Rhizorhabdus wittichii (strain DSM 6014 / CCUG 31198 / JCM 15750 / NBRC 105917 / EY 4224 / RW1) (Sphingomonas wittichii).